We begin with the raw amino-acid sequence, 414 residues long: Transposon Ty4-J Gag polyprotein (414 aa).

Residues 39-115 are a coiled coil; the sequence is RKVSIKDEQV…IQLLETNENN (77 aa). A disordered region spans residues 378–414; the sequence is GAQRQQPLKSSAKRTKVLEQDTKKVEQSVQQQKTGNY. A compositionally biased stretch (basic and acidic residues) spans 393–403; that stretch reads KVLEQDTKKVE. Residues 404-414 are compositionally biased toward polar residues; that stretch reads QSVQQQKTGNY.

In terms of biological role, capsid protein (CA) is the structural component of the virus-like particle (VLP), forming the shell that encapsulates the retrotransposons dimeric RNA genome. The sequence is that of Transposon Ty4-J Gag polyprotein (TY4A-J) from Saccharomyces cerevisiae (strain ATCC 204508 / S288c) (Baker's yeast).